Consider the following 252-residue polypeptide: tRNA pseudouridine synthase A (252 aa).

Aspartate 54 functions as the Nucleophile in the catalytic mechanism. Residue tyrosine 113 participates in substrate binding.

This sequence belongs to the tRNA pseudouridine synthase TruA family. As to quaternary structure, homodimer.

The catalysed reaction is uridine(38/39/40) in tRNA = pseudouridine(38/39/40) in tRNA. In terms of biological role, formation of pseudouridine at positions 38, 39 and 40 in the anticodon stem and loop of transfer RNAs. This chain is tRNA pseudouridine synthase A, found in Bacteroides fragilis (strain ATCC 25285 / DSM 2151 / CCUG 4856 / JCM 11019 / LMG 10263 / NCTC 9343 / Onslow / VPI 2553 / EN-2).